The primary structure comprises 355 residues: 1D-myo-inositol 2-acetamido-2-deoxy-alpha-D-glucopyranoside deacetylase 3 (355 aa).

Residues H31, D34, and H169 each coordinate Zn(2+).

It belongs to the MshB deacetylase family. Zn(2+) serves as cofactor.

It carries out the reaction 1D-myo-inositol 2-acetamido-2-deoxy-alpha-D-glucopyranoside + H2O = 1D-myo-inositol 2-amino-2-deoxy-alpha-D-glucopyranoside + acetate. Functionally, catalyzes the deacetylation of 1D-myo-inositol 2-acetamido-2-deoxy-alpha-D-glucopyranoside (GlcNAc-Ins) in the mycothiol biosynthesis pathway. In Catenulispora acidiphila (strain DSM 44928 / JCM 14897 / NBRC 102108 / NRRL B-24433 / ID139908), this protein is 1D-myo-inositol 2-acetamido-2-deoxy-alpha-D-glucopyranoside deacetylase 3.